A 916-amino-acid polypeptide reads, in one-letter code: Protein translocase subunit SecA (916 aa).

ATP is bound by residues Gln88, 106–110 (GEGKT), and Asp519. The Zn(2+) site is built by Cys902, Cys904, Cys913, and Cys914.

Belongs to the SecA family. In terms of assembly, monomer and homodimer. Part of the essential Sec protein translocation apparatus which comprises SecA, SecYEG and auxiliary proteins SecDF. Other proteins may also be involved. Zn(2+) is required as a cofactor.

The protein resides in the cell inner membrane. It is found in the cytoplasm. It catalyses the reaction ATP + H2O + cellular proteinSide 1 = ADP + phosphate + cellular proteinSide 2.. Its function is as follows. Part of the Sec protein translocase complex. Interacts with the SecYEG preprotein conducting channel. Has a central role in coupling the hydrolysis of ATP to the transfer of proteins into and across the cell membrane, serving as an ATP-driven molecular motor driving the stepwise translocation of polypeptide chains across the membrane. The protein is Protein translocase subunit SecA of Treponema pallidum (strain Nichols).